A 319-amino-acid chain; its full sequence is METFPSVGSPGLWAGFIAFVIAMLALDLGVFHRKAHVVKFKEALGWSALWVSLALVFGAGVWWKFGPEPGLQFITGYLIEKSLSVDNIFVFVVIFSALRIPALYQHRVLFWGILSALALRAIMIFAGVAMLARFHWLIYVFGGFLIITGVKLFLQRNKEDNPEEGALMRLARRTIPSTPNFDGHHFFTVENGRKLATPLLMALLLVEASDILFALDSIPAIFAVTTDPFIVFTSNIFAILGLRSMFFMLAGAVEKFSYLKVGLSAVLVFVGTKMAIIDFVKMPPEVSLSVIAGLLGASIVASLIKSRHAPTSDADAPKV.

Helical transmembrane passes span 11–31 (GLWA…LGVF), 43–63 (ALGW…GVWW), 83–103 (LSVD…IPAL), 108–128 (VLFW…FAGV), 134–154 (FHWL…KLFL), 195–215 (LATP…LFAL), 220–240 (AIFA…FAIL), 260–280 (KVGL…IDFV), and 284–304 (PEVS…ASLI).

This sequence belongs to the TerC family.

The protein resides in the cell membrane. This is an uncharacterized protein from Myxococcus xanthus.